Consider the following 838-residue polypeptide: Ribonuclease Z (838 aa).

At S824 the chain carries Phosphoserine.

The protein belongs to the RNase Z family. In terms of assembly, homodimer. The cofactor is Zn(2+).

The protein resides in the cytoplasm. It localises to the nucleus. The enzyme catalyses Endonucleolytic cleavage of RNA, removing extra 3' nucleotides from tRNA precursor, generating 3' termini of tRNAs. A 3'-hydroxy group is left at the tRNA terminus and a 5'-phosphoryl group is left at the trailer molecule.. Functionally, zinc phosphodiesterase, which displays some tRNA 3'-processing endonuclease activity. Probably involved in tRNA maturation, by removing a 3'-trailer from precursor tRNA. The chain is Ribonuclease Z (TRZ1) from Saccharomyces cerevisiae (strain ATCC 204508 / S288c) (Baker's yeast).